Reading from the N-terminus, the 540-residue chain is FAD-binding monooxygenase lolF1 (540 aa).

FAD-binding positions include 43–46 (VWRE) and 55–58 (DSLF). NADP(+)-binding positions include 53–55 (AVD), 182–188 (TGPSGVQ), and 205–206 (QS).

The protein belongs to the FAD-binding monooxygenase family. It depends on FAD as a cofactor.

It functions in the pathway alkaloid biosynthesis. Its function is as follows. FAD-binding monooxygenase; part of the gene cluster that mediates the biosynthesis of loline alkaloids, potent insecticidal agents composed of a pyrrolizidine ring system and an uncommon ether bridge linking carbons 2 and 7. Lolines are structurally differentiated by the various modifications of the L-amino group and include norloline, loline, N-methylloline, N-acetylloline, N-acetylnorloline, and N-formylloline. The first committed step is the condensation of O-acetyl-L-homoserine (derived from L-aspartic acid) and L-proline, probably catalyzed by the gamma-type pyridoxal 5'-phosphate(PLP)-dependent enzyme lolC, to give the diamino diacid, NACPP. Ensuing cyclization, decarboxylation, and acetylation steps yield 1-exo-acetamidopyrrolizidine (AcAP). LolO is required for installation of the ether bridge upon the pathway intermediate, 1-exo-acetamidopyrrolizidine (AcAP). In sequential 2-oxoglutarate- and O(2)-consuming steps, lolO removes hydrogens from C2 and C7 of AcAP to form both carbon-oxygen bonds in N-acetylnorloline (NANL), the precursor to all other lolines. The enzymes lolD, lolE, lolF and lolT have also been proposed to be involved in the ether-bridge installation. Further processing of the exocyclic moiety of NANL by fungal N-acetamidase (LolN), methyltransferase (LolM), and cytochrome P450 (LolP) enzymes, with occasional involvement of a plant acetyltransferase, generates the other known lolines. LolN transforms NANL to norlonine which is monomethylated and dimethylated to respectively lonine and N-methyllonine (NML) by lolM. LolP catalyzes hydroxylation of the methyl group in N-methylloline (NML) and further oxygenation to N-formylloline (NFL). A plant acetyltransferase is responsible for the acetylation of loline to form N-acetylloline (NAL). LolA might interact with aspartate kinase to prevent feedback inhibition of its activity by these end products and thereby promote production of L-homoserine from L-aspartate. The chain is FAD-binding monooxygenase lolF1 from Epichloe uncinata (Endophyte fungus).